The chain runs to 1092 residues: MLFDNKNRGALNSLNTPDIASLSISSMSDYHVFDFPGKDLQREEVIDLLDQQGFIPDDLIEQEVDWFYNSLGIDDLFFSRESPQLISNIIHSLYASKLDFFAKSKFNGIQPRLFSIKNKIITNDNHAIFMESNTGVSISDSQQKNFKFASDAVGNDTLEHGKDTIKKNRIEMDDSCPPYELDSEIDDLFLDNKSQKNCRLVSFWAPESELKLTFVYESVYPNDDPAGVDISSQDLLKGDIESISDKTMYKVSSNENKKLYGLLLKLVKEREGPVIKTTRSVENKDEIRLLVAYKRFTTKRYYSALNSLFHYYKLKPSKFYLESFNVKDDDIIIFSVYLNENQQLEDVLLHDVEAALKQVEREASLLYAIPNNSFHEVYQRRQFSPKEAIYAHIGAIFINHFVNRLGSDYQNLLSQITIKRNDTTLLEIVENLKRKLRNETLTQQTIINIMSKHYTIISKLYKNFAQIHYYHNSTKDMEKTLSFQRLEKVEPFKNDQEFEAYLNKFIPNDSPDLLILKTLNIFNKSILKTNFFITRKVAISFRLDPSLVMTKFEYPETPYGIFFVVGNTFKGFHIRFRDIARGGIRIVCSRNQDIYDLNSKNVIDENYQLASTQQRKNKDIPEGGSKGVILLNPGLVEHDQTFVAFSQYVDAMIDILINDPLKENYVNLLPKEEILFFGPDEGTAGFVDWATNHARVRNCPWWKSFLTGKSPSLGGIPHDEYGMTSLGVRAYVNKIYETLNLTNSTVYKFQTGGPDGDLGSNEILLSSPNECYLAILDGSGVLCDPKGLDKDELCRLAHERKMISDFDTSKLSNNGFFVSVDAMDIMLPNGTIVANGTTFRNTFHTQIFKFVDHVDIFVPCGGRPNSITLNNLHYFVDEKTGKCKIPYIVEGANLFITQPAKNALEEHGCILFKDASANKGGVTSSSMEVLASLALNDNDFVHKFIGDVSGERSALYKSYVVEVQSRIQKNAELEFGQLWNLNQLNGTHISEISNQLSFTINKLNDDLVASQELWLNDLKLRNYLLLDKIIPKILIDVAGPQSVLENIPESYLKVLLSSYLSSTFVYQNGIDVNIGKFLEFIGGLKREAEASA.

Residue K626 is part of the active site.

It belongs to the Glu/Leu/Phe/Val dehydrogenases family. As to quaternary structure, homotetramer. Interacts with NNK1. In terms of processing, phosphorylated by a complex containing the NNK1 kinase.

It catalyses the reaction L-glutamate + NAD(+) + H2O = 2-oxoglutarate + NH4(+) + NADH + H(+). Functionally, NAD(+)-dependent glutamate dehydrogenase which degrades glutamate to ammonia and alpha-ketoglutarate. The protein is NAD-specific glutamate dehydrogenase (GDH2) of Saccharomyces cerevisiae (strain ATCC 204508 / S288c) (Baker's yeast).